We begin with the raw amino-acid sequence, 131 residues long: Peptide methionine sulfoxide reductase MsrB (131 aa).

Positions 8-130 (LDEWRSMLDP…NSVCIDLRPR (123 aa)) constitute a MsrB domain. The Zn(2+) site is built by Cys-47, Cys-50, Cys-96, and Cys-99. The active-site Nucleophile is the Cys-119.

The protein belongs to the MsrB Met sulfoxide reductase family. Zn(2+) serves as cofactor.

It carries out the reaction L-methionyl-[protein] + [thioredoxin]-disulfide + H2O = L-methionyl-(R)-S-oxide-[protein] + [thioredoxin]-dithiol. This Pseudomonas putida (strain ATCC 47054 / DSM 6125 / CFBP 8728 / NCIMB 11950 / KT2440) protein is Peptide methionine sulfoxide reductase MsrB.